The chain runs to 222 residues: Pyridoxal phosphate homeostasis protein (222 aa).

N6-(pyridoxal phosphate)lysine is present on lysine 35.

The protein belongs to the pyridoxal phosphate-binding protein YggS/PROSC family.

In terms of biological role, pyridoxal 5'-phosphate (PLP)-binding protein, which is involved in PLP homeostasis. This Helicobacter pylori (strain J99 / ATCC 700824) (Campylobacter pylori J99) protein is Pyridoxal phosphate homeostasis protein.